We begin with the raw amino-acid sequence, 1411 residues long: DNA-directed RNA polymerase subunit beta' (1411 aa).

Residues Cys-69, Cys-71, Cys-84, and Cys-87 each coordinate Zn(2+). Positions 461, 463, and 465 each coordinate Mg(2+). 4 residues coordinate Zn(2+): Cys-809, Cys-883, Cys-890, and Cys-893.

It belongs to the RNA polymerase beta' chain family. As to quaternary structure, the RNAP catalytic core consists of 2 alpha, 1 beta, 1 beta' and 1 omega subunit. When a sigma factor is associated with the core the holoenzyme is formed, which can initiate transcription. The cofactor is Mg(2+). Zn(2+) serves as cofactor.

The enzyme catalyses RNA(n) + a ribonucleoside 5'-triphosphate = RNA(n+1) + diphosphate. DNA-dependent RNA polymerase catalyzes the transcription of DNA into RNA using the four ribonucleoside triphosphates as substrates. The protein is DNA-directed RNA polymerase subunit beta' of Ehrlichia ruminantium (strain Welgevonden).